A 161-amino-acid polypeptide reads, in one-letter code: ATP synthase subunit b 1 (161 aa).

The helical transmembrane segment at 6–26 (ETWVAIAFVILMVVFGYLGVF) threads the bilayer.

This sequence belongs to the ATPase B chain family. In terms of assembly, F-type ATPases have 2 components, F(1) - the catalytic core - and F(0) - the membrane proton channel. F(1) has five subunits: alpha(3), beta(3), gamma(1), delta(1), epsilon(1). F(0) has three main subunits: a(1), b(2) and c(10-14). The alpha and beta chains form an alternating ring which encloses part of the gamma chain. F(1) is attached to F(0) by a central stalk formed by the gamma and epsilon chains, while a peripheral stalk is formed by the delta and b chains.

It is found in the cell inner membrane. F(1)F(0) ATP synthase produces ATP from ADP in the presence of a proton or sodium gradient. F-type ATPases consist of two structural domains, F(1) containing the extramembraneous catalytic core and F(0) containing the membrane proton channel, linked together by a central stalk and a peripheral stalk. During catalysis, ATP synthesis in the catalytic domain of F(1) is coupled via a rotary mechanism of the central stalk subunits to proton translocation. Its function is as follows. Component of the F(0) channel, it forms part of the peripheral stalk, linking F(1) to F(0). The polypeptide is ATP synthase subunit b 1 (Bradyrhizobium diazoefficiens (strain JCM 10833 / BCRC 13528 / IAM 13628 / NBRC 14792 / USDA 110)).